A 35-amino-acid chain; its full sequence is 30 kDa neutral phosphatase (35 aa).

Residues 1-28 are compositionally biased toward polar residues; that stretch reads KSSAEVQQTQQASIPASQKANLGNQNNI. A disordered region spans residues 1-35; sequence KSSAEVQQTQQASIPASQKANLGNQNNIMXVAXYQ.

In terms of biological role, highly cationic enzyme that can bind human or rat immunoglobulins as well as serum albumin, and could therefore be involved in post-infectious sequelae. The chain is 30 kDa neutral phosphatase from Staphylococcus aureus.